Reading from the N-terminus, the 570-residue chain is Dihydroxy-acid dehydratase 2 (570 aa).

A [2Fe-2S] cluster-binding site is contributed by Cys51. Residue Asp83 coordinates Mg(2+). Position 124 (Cys124) interacts with [2Fe-2S] cluster. The Mg(2+) site is built by Asp125 and Lys126. Position 126 is an N6-carboxylysine (Lys126). Cys196 contributes to the [2Fe-2S] cluster binding site. Glu446 provides a ligand contact to Mg(2+). Ser472 (proton acceptor) is an active-site residue.

This sequence belongs to the IlvD/Edd family. As to quaternary structure, homodimer. Requires [2Fe-2S] cluster as cofactor. Mg(2+) serves as cofactor.

It carries out the reaction (2R)-2,3-dihydroxy-3-methylbutanoate = 3-methyl-2-oxobutanoate + H2O. The catalysed reaction is (2R,3R)-2,3-dihydroxy-3-methylpentanoate = (S)-3-methyl-2-oxopentanoate + H2O. It functions in the pathway amino-acid biosynthesis; L-isoleucine biosynthesis; L-isoleucine from 2-oxobutanoate: step 3/4. Its pathway is amino-acid biosynthesis; L-valine biosynthesis; L-valine from pyruvate: step 3/4. In terms of biological role, functions in the biosynthesis of branched-chain amino acids. Catalyzes the dehydration of (2R,3R)-2,3-dihydroxy-3-methylpentanoate (2,3-dihydroxy-3-methylvalerate) into 2-oxo-3-methylpentanoate (2-oxo-3-methylvalerate) and of (2R)-2,3-dihydroxy-3-methylbutanoate (2,3-dihydroxyisovalerate) into 2-oxo-3-methylbutanoate (2-oxoisovalerate), the penultimate precursor to L-isoleucine and L-valine, respectively. This is Dihydroxy-acid dehydratase 2 from Bordetella bronchiseptica (strain ATCC BAA-588 / NCTC 13252 / RB50) (Alcaligenes bronchisepticus).